Here is a 275-residue protein sequence, read N- to C-terminus: MEMO1 family protein Nmar_0215 (275 aa).

Belongs to the MEMO1 family.

This Nitrosopumilus maritimus (strain SCM1) protein is MEMO1 family protein Nmar_0215.